A 65-amino-acid polypeptide reads, in one-letter code: Sec-independent protein translocase protein TatA (65 aa).

Residues 9–29 (ILIIVLLVVVVFGVGKLPQVG) form a helical membrane-spanning segment. Positions 40–65 (RKASTGEDAKEEVETKEETKPAEKSE) are disordered. Basic and acidic residues predominate over residues 43 to 65 (STGEDAKEEVETKEETKPAEKSE).

This sequence belongs to the TatA/E family. Forms a complex with TatC.

The protein resides in the cell membrane. Part of the twin-arginine translocation (Tat) system that transports large folded proteins containing a characteristic twin-arginine motif in their signal peptide across membranes. TatA could form the protein-conducting channel of the Tat system. The sequence is that of Sec-independent protein translocase protein TatA from Dehalococcoides mccartyi (strain ATCC BAA-2100 / JCM 16839 / KCTC 5957 / BAV1).